The sequence spans 892 residues: DNA mismatch repair protein MutS (892 aa).

607 to 614 (GPNMSGKS) is an ATP binding site. Residues 826 to 854 (ETKAETEEESQLSFFGGEQSSKKQDKPVL) form a disordered region. Residues 845 to 854 (SSKKQDKPVL) show a composition bias toward basic and acidic residues.

This sequence belongs to the DNA mismatch repair MutS family.

Functionally, this protein is involved in the repair of mismatches in DNA. It is possible that it carries out the mismatch recognition step. This protein has a weak ATPase activity. The chain is DNA mismatch repair protein MutS from Bacillus cereus (strain AH187).